Consider the following 525-residue polypeptide: Putative ribose/galactose/methyl galactoside import ATP-binding protein (525 aa).

The disordered stretch occupies residues 1–30 (MFGSATANPPAQRDLPSSDSDSPTPDAQPP). Residues 14–25 (DLPSSDSDSPTP) are compositionally biased toward low complexity. 2 consecutive ABC transporter domains span residues 33 to 269 (LEIS…VGRE) and 279 to 523 (KPPG…SGHK). An ATP-binding site is contributed by 65 to 72 (GENGAGKS).

The protein belongs to the ABC transporter superfamily. Carbohydrate importer 2 (CUT2) (TC 3.A.1.2) family.

It localises to the cell inner membrane. It catalyses the reaction D-ribose(out) + ATP + H2O = D-ribose(in) + ADP + phosphate + H(+). The enzyme catalyses D-galactose(out) + ATP + H2O = D-galactose(in) + ADP + phosphate + H(+). In terms of biological role, part of an ABC transporter complex involved in carbohydrate import. Could be involved in ribose, galactose and/or methyl galactoside import. Responsible for energy coupling to the transport system. The protein is Putative ribose/galactose/methyl galactoside import ATP-binding protein of Pseudomonas savastanoi pv. phaseolicola (strain 1448A / Race 6) (Pseudomonas syringae pv. phaseolicola (strain 1448A / Race 6)).